The sequence spans 478 residues: tRNA(Ile)-lysidine synthase (478 aa).

S27–S32 lines the ATP pocket.

The protein belongs to the tRNA(Ile)-lysidine synthase family.

It localises to the cytoplasm. The catalysed reaction is cytidine(34) in tRNA(Ile2) + L-lysine + ATP = lysidine(34) in tRNA(Ile2) + AMP + diphosphate + H(+). In terms of biological role, ligates lysine onto the cytidine present at position 34 of the AUA codon-specific tRNA(Ile) that contains the anticodon CAU, in an ATP-dependent manner. Cytidine is converted to lysidine, thus changing the amino acid specificity of the tRNA from methionine to isoleucine. In Rickettsia conorii (strain ATCC VR-613 / Malish 7), this protein is tRNA(Ile)-lysidine synthase.